Consider the following 146-residue polypeptide: Large ribosomal subunit protein uL15 (146 aa).

A disordered region spans residues Met-1–Pro-46. Low complexity predominate over residues Gly-29 to Lys-43.

Belongs to the universal ribosomal protein uL15 family. Part of the 50S ribosomal subunit.

Its function is as follows. Binds to the 23S rRNA. This chain is Large ribosomal subunit protein uL15, found in Cutibacterium acnes (strain DSM 16379 / KPA171202) (Propionibacterium acnes).